The following is a 65-amino-acid chain: U11-theraphotoxin-Cg1a (65 aa).

The signal sequence occupies residues 1–21 (MKTTILLVILGLTLLFALSAA). A propeptide spanning residues 22–29 (TELKDEER) is cleaved from the precursor. 3 disulfides stabilise this stretch: Cys31-Cys45, Cys38-Cys50, and Cys44-Cys57.

Belongs to the neurotoxin 10 (Hwtx-1) family. 32 (Jztx-16) subfamily. As to expression, expressed by the venom gland.

It is found in the secreted. Functionally, probable ion channel inhibitor. The polypeptide is U11-theraphotoxin-Cg1a (Chilobrachys guangxiensis (Chinese earth tiger tarantula)).